The chain runs to 479 residues: Bifunctional protein HldE (479 aa).

The interval 1-322 (MLAETQLAPI…AALERTAAQI (322 aa)) is ribokinase. 198-201 (NRRE) contacts ATP. The active site involves D267. Positions 350–479 (FTNGCFDLVH…TSSLVAKART (130 aa)) are cytidylyltransferase.

The protein in the N-terminal section; belongs to the carbohydrate kinase PfkB family. It in the C-terminal section; belongs to the cytidylyltransferase family. Homodimer.

The catalysed reaction is D-glycero-beta-D-manno-heptose 7-phosphate + ATP = D-glycero-beta-D-manno-heptose 1,7-bisphosphate + ADP + H(+). It catalyses the reaction D-glycero-beta-D-manno-heptose 1-phosphate + ATP + H(+) = ADP-D-glycero-beta-D-manno-heptose + diphosphate. It participates in nucleotide-sugar biosynthesis; ADP-L-glycero-beta-D-manno-heptose biosynthesis; ADP-L-glycero-beta-D-manno-heptose from D-glycero-beta-D-manno-heptose 7-phosphate: step 1/4. Its pathway is nucleotide-sugar biosynthesis; ADP-L-glycero-beta-D-manno-heptose biosynthesis; ADP-L-glycero-beta-D-manno-heptose from D-glycero-beta-D-manno-heptose 7-phosphate: step 3/4. Its function is as follows. Catalyzes the phosphorylation of D-glycero-D-manno-heptose 7-phosphate at the C-1 position to selectively form D-glycero-beta-D-manno-heptose-1,7-bisphosphate. Catalyzes the ADP transfer from ATP to D-glycero-beta-D-manno-heptose 1-phosphate, yielding ADP-D-glycero-beta-D-manno-heptose. This Azorhizobium caulinodans (strain ATCC 43989 / DSM 5975 / JCM 20966 / LMG 6465 / NBRC 14845 / NCIMB 13405 / ORS 571) protein is Bifunctional protein HldE.